We begin with the raw amino-acid sequence, 346 residues long: tRNA pseudouridine synthase D (346 aa).

The active-site Nucleophile is aspartate 83. The 147-residue stretch at 159–305 (GVPNYFGEQR…LKQERRALRV (147 aa)) folds into the TRUD domain.

The protein belongs to the pseudouridine synthase TruD family.

The enzyme catalyses uridine(13) in tRNA = pseudouridine(13) in tRNA. Its function is as follows. Responsible for synthesis of pseudouridine from uracil-13 in transfer RNAs. This is tRNA pseudouridine synthase D from Hydrogenovibrio crunogenus (strain DSM 25203 / XCL-2) (Thiomicrospira crunogena).